Reading from the N-terminus, the 382-residue chain is Alkanesulfonate monooxygenase (382 aa).

It belongs to the SsuD family.

The enzyme catalyses an alkanesulfonate + FMNH2 + O2 = an aldehyde + FMN + sulfite + H2O + 2 H(+). Functionally, catalyzes the desulfonation of aliphatic sulfonates. In Pseudomonas sp, this protein is Alkanesulfonate monooxygenase.